The primary structure comprises 359 residues: Peptide chain release factor 1 (359 aa).

Residue Gln-236 is modified to N5-methylglutamine.

It belongs to the prokaryotic/mitochondrial release factor family. In terms of processing, methylated by PrmC. Methylation increases the termination efficiency of RF1.

It localises to the cytoplasm. Its function is as follows. Peptide chain release factor 1 directs the termination of translation in response to the peptide chain termination codons UAG and UAA. The sequence is that of Peptide chain release factor 1 from Streptococcus agalactiae serotype Ia (strain ATCC 27591 / A909 / CDC SS700).